The sequence spans 543 residues: CTP synthase (543 aa).

Positions 1-265 are amidoligase domain; sequence MTRYVFITGG…DREVLRHFGL (265 aa). Serine 13 is a binding site for CTP. Serine 13 lines the UTP pocket. ATP is bound at residue 14-19; the sequence is SLGKGI. Tyrosine 54 serves as a coordination point for L-glutamine. Position 71 (aspartate 71) interacts with ATP. Aspartate 71 and glutamate 139 together coordinate Mg(2+). CTP is bound by residues 146 to 148, 186 to 191, and lysine 222; these read DIE and KTKPTQ. Residues 186–191 and lysine 222 each bind UTP; that span reads KTKPTQ. Valine 240 is a binding site for ATP. One can recognise a Glutamine amidotransferase type-1 domain in the interval 291 to 542; sequence TIAVVGKYTN…IEAAVKQMRL (252 aa). Glycine 353 contributes to the L-glutamine binding site. The active-site Nucleophile; for glutamine hydrolysis is cysteine 380. Residues 381–384, glutamate 404, and arginine 470 each bind L-glutamine; that span reads FGMQ. Active-site residues include histidine 515 and glutamate 517.

It belongs to the CTP synthase family. Homotetramer.

It catalyses the reaction UTP + L-glutamine + ATP + H2O = CTP + L-glutamate + ADP + phosphate + 2 H(+). The catalysed reaction is L-glutamine + H2O = L-glutamate + NH4(+). It carries out the reaction UTP + NH4(+) + ATP = CTP + ADP + phosphate + 2 H(+). It functions in the pathway pyrimidine metabolism; CTP biosynthesis via de novo pathway; CTP from UDP: step 2/2. Its activity is regulated as follows. Allosterically activated by GTP, when glutamine is the substrate; GTP has no effect on the reaction when ammonia is the substrate. The allosteric effector GTP functions by stabilizing the protein conformation that binds the tetrahedral intermediate(s) formed during glutamine hydrolysis. Inhibited by the product CTP, via allosteric rather than competitive inhibition. Its function is as follows. Catalyzes the ATP-dependent amination of UTP to CTP with either L-glutamine or ammonia as the source of nitrogen. Regulates intracellular CTP levels through interactions with the four ribonucleotide triphosphates. The chain is CTP synthase from Acidiphilium cryptum (strain JF-5).